Consider the following 143-residue polypeptide: Ribosome maturation factor RimP (143 aa).

The protein belongs to the RimP family.

Its subcellular location is the cytoplasm. Required for maturation of 30S ribosomal subunits. This is Ribosome maturation factor RimP from Borrelia hermsii (strain HS1 / DAH).